A 394-amino-acid chain; its full sequence is Phosphopentomutase (394 aa).

6 residues coordinate Mn(2+): Asp-15, Asp-288, His-293, Asp-329, His-330, and His-341.

It belongs to the phosphopentomutase family. Mn(2+) is required as a cofactor.

It localises to the cytoplasm. It catalyses the reaction 2-deoxy-alpha-D-ribose 1-phosphate = 2-deoxy-D-ribose 5-phosphate. The enzyme catalyses alpha-D-ribose 1-phosphate = D-ribose 5-phosphate. It functions in the pathway carbohydrate degradation; 2-deoxy-D-ribose 1-phosphate degradation; D-glyceraldehyde 3-phosphate and acetaldehyde from 2-deoxy-alpha-D-ribose 1-phosphate: step 1/2. In terms of biological role, isomerase that catalyzes the conversion of deoxy-ribose 1-phosphate (dRib-1-P) and ribose 1-phosphate (Rib-1-P) to deoxy-ribose 5-phosphate (dRib-5-P) and ribose 5-phosphate (Rib-5-P), respectively. This chain is Phosphopentomutase (drm), found in Bacillus subtilis (strain 168).